A 307-amino-acid polypeptide reads, in one-letter code: Ninja-family protein 5 (307 aa).

2 disordered regions span residues 1-159 (MASR…EHTV) and 173-208 (TAGS…EPQP). Residues 8 to 30 (GGFGRDGGQAPVGGAGAAPGPGG) show a composition bias toward gly residues. Polar residues-rich tracts occupy residues 63–83 (QRSS…GTSC) and 173–183 (TAGSPTPSRPQ).

The protein belongs to the Ninja family.

It is found in the nucleus. The sequence is that of Ninja-family protein 5 from Zea mays (Maize).